The chain runs to 307 residues: Tropinone reductase homolog At2g29340 (307 aa).

Position 13–37 (13–37) interacts with NADP(+); the sequence is LVTGGASGIGYAIVEELAGFGARIH. Ser146 provides a ligand contact to substrate. The active-site Proton acceptor is Tyr159.

It belongs to the short-chain dehydrogenases/reductases (SDR) family. SDR65C subfamily.

The polypeptide is Tropinone reductase homolog At2g29340 (Arabidopsis thaliana (Mouse-ear cress)).